A 114-amino-acid chain; its full sequence is Large ribosomal subunit protein uL18 (114 aa).

This sequence belongs to the universal ribosomal protein uL18 family. Part of the 50S ribosomal subunit; part of the 5S rRNA/L5/L18/L25 subcomplex. Contacts the 5S and 23S rRNAs.

This is one of the proteins that bind and probably mediate the attachment of the 5S RNA into the large ribosomal subunit, where it forms part of the central protuberance. The protein is Large ribosomal subunit protein uL18 of Azobacteroides pseudotrichonymphae genomovar. CFP2.